We begin with the raw amino-acid sequence, 316 residues long: Protoheme IX farnesyltransferase (316 aa).

The next 9 membrane-spanning stretches (helical) occupy residues Val-32–His-52, Pro-53–Leu-73, Ile-93–Phe-113, Val-116–Phe-136, Asn-152–Thr-172, Thr-180–Phe-200, Val-221–Ser-241, Leu-252–Met-271, and Ile-289–Val-309.

Belongs to the UbiA prenyltransferase family. Protoheme IX farnesyltransferase subfamily.

Its subcellular location is the cell inner membrane. It catalyses the reaction heme b + (2E,6E)-farnesyl diphosphate + H2O = Fe(II)-heme o + diphosphate. It functions in the pathway porphyrin-containing compound metabolism; heme O biosynthesis; heme O from protoheme: step 1/1. Converts heme B (protoheme IX) to heme O by substitution of the vinyl group on carbon 2 of heme B porphyrin ring with a hydroxyethyl farnesyl side group. The sequence is that of Protoheme IX farnesyltransferase from Rhizobium johnstonii (strain DSM 114642 / LMG 32736 / 3841) (Rhizobium leguminosarum bv. viciae).